A 605-amino-acid chain; its full sequence is Protein ZRG17 (605 aa).

Topologically, residues 1–225 (METPQMNAIQ…DLLSNLPWPK (225 aa)) are cytoplasmic. Phosphoserine is present on residues S16 and S131. A disordered region spans residues 118 to 178 (PAPKLVPPPP…PSSAASRTSF (61 aa)). Polar residues predominate over residues 143 to 176 (SKRSSMTLDSPFNFTTSTLQPHQQTPPSSAASRT). Residues 226–246 (AYIQLSIAALQIFACLITFQV) form a helical membrane-spanning segment. At 247–254 (GHLYSWSN) the chain is on the lumenal side. A helical transmembrane segment spans residues 255 to 275 (FITLSHFITYDIIGSLVIIFV). At 276–287 (ENLSQFQVWFTG) the chain is on the cytoplasmic side. Residues 288-308 (TITFPFGLNRIDVLLSFALAV) traverse the membrane as a helical segment. Position 309 (S309) is a topological domain, lumenal. Residues 310 to 330 (LCFVGLDLLFHIIEEFIVLFV) traverse the membrane as a helical segment. Topologically, residues 331 to 363 (ESGSSLTNNHDHDEINEQIPHSHIANANDSQNE) are cytoplasmic. Residues 364-384 (NITLWYSILMINLVLSTLSLY) traverse the membrane as a helical segment. Residues 385-399 (KTFYANKYSNLKTKN) lie on the Lumenal side of the membrane. Residues 400–420 (PIITITYTAYLFIYPLLLDLL) form a helical membrane-spanning segment. At 421 to 422 (SS) the chain is on the cytoplasmic side. The helical transmembrane segment at 423 to 443 (ISDYLATLVISSLILWHGLTI) threads the bilayer. The Lumenal segment spans residues 444-545 (ARWTSTVLLM…ERLSEFKSRY (102 aa)). The segment covering 473–482 (DTTAHTQQVE) has biased composition (polar residues). The disordered stretch occupies residues 473–497 (DTTAHTQQVESKAAKEKPSVRPRSM). S498 is modified (phosphoserine). A helical membrane pass occupies residues 546–566 (ILNYDDIVISKVNFTLYVVLI). The Cytoplasmic portion of the chain corresponds to 567 to 605 (KITMKGGSDDDELMLRLAIDKCIQTSIPTCETTIDIDRI).

It localises to the endoplasmic reticulum membrane. This is Protein ZRG17 (ZRG17) from Saccharomyces cerevisiae (strain ATCC 204508 / S288c) (Baker's yeast).